We begin with the raw amino-acid sequence, 697 residues long: Serine/threonine-protein kinase tousled-like 2 (697 aa).

Disordered stretches follow at residues 25–159 (VAKG…SQSE) and 288–316 (KLLIKKKPPSASQTPPPNLEPNKRKSKSN). Positions 31–44 (HNESSNQSLCSVGS) are enriched in polar residues. Residues 46–61 (SDKELETPEKKSNDQR) are compositionally biased toward basic and acidic residues. Polar residues predominate over residues 109-145 (SSPQHSLSNPPAAVQQGSPSSISSVNTDHSHTSTSHK). 2 coiled-coil regions span residues 265–294 (AFQNLVKQQERVNGQREEIERQRKLLIKKK) and 336–373 (KLRLGHLKKEEAEIQVELERLERVRNLHIRELKRIHNE). The region spanning 388–666 (YLLLHLLGRG…VHQLASDPYL (279 aa)) is the Protein kinase domain. ATP-binding positions include 394–402 (LGRGGFSEV) and lysine 417. Aspartate 518 serves as the catalytic Proton acceptor.

This sequence belongs to the protein kinase superfamily. Ser/Thr protein kinase family. As to quaternary structure, monomer. May form homodimers; homodimerization may enhance autophosphoylation and enzymatic activity. Heterodimer with TLK1. Mg(2+) serves as cofactor. Post-translationally, phosphorylated. Autophosphorylated; phosphorylation promotes the assembly of higher order oligomers and enzymatic activity.

Its subcellular location is the nucleus. It localises to the nucleoplasm. The protein localises to the cytoplasm. The protein resides in the perinuclear region. It is found in the cytoskeleton. The catalysed reaction is L-seryl-[protein] + ATP = O-phospho-L-seryl-[protein] + ADP + H(+). It carries out the reaction L-threonyl-[protein] + ATP = O-phospho-L-threonyl-[protein] + ADP + H(+). Serine/threonine-protein kinase involved in the process of chromatin assembly and probably also DNA replication, transcription, repair, and chromosome segregation. Negative regulator of amino acid starvation-induced autophagy. The protein is Serine/threonine-protein kinase tousled-like 2 of Danio rerio (Zebrafish).